The following is a 307-amino-acid chain: Ribosomal RNA small subunit methyltransferase H (307 aa).

Residues 33-35 (GGY), Asp-51, Phe-82, Asp-96, and Gln-103 contribute to the S-adenosyl-L-methionine site.

Belongs to the methyltransferase superfamily. RsmH family.

It localises to the cytoplasm. It catalyses the reaction cytidine(1402) in 16S rRNA + S-adenosyl-L-methionine = N(4)-methylcytidine(1402) in 16S rRNA + S-adenosyl-L-homocysteine + H(+). Functionally, specifically methylates the N4 position of cytidine in position 1402 (C1402) of 16S rRNA. The polypeptide is Ribosomal RNA small subunit methyltransferase H (Rickettsia rickettsii (strain Iowa)).